A 281-amino-acid polypeptide reads, in one-letter code: NADH--cytochrome b5 reductase 1 (281 aa).

Residues 13-33 form a helical membrane-spanning segment; sequence ILLGVFVAFVAVGAGAAYFLT. The AKR2A-binding sequence (ABS) required for mitochondrion outer membrane targeting signature appears at 34 to 40; the sequence is SSKKRRV. The FAD-binding FR-type domain occupies 45 to 149; the sequence is ENFKEFKLVK…KGPKGRFKYQ (105 aa). Residues 129–144 and 155–187 contribute to the FAD site; these read REMR…GPKG and AFGM…KVHL. At T166 the chain carries Phosphothreonine.

It belongs to the flavoprotein pyridine nucleotide cytochrome reductase family. In terms of assembly, monomer. Interacts with AKR2A. It depends on FAD as a cofactor. As to expression, expressed in roots, stems, flowers and siliques. Detected in leaves.

Its subcellular location is the mitochondrion outer membrane. The catalysed reaction is 2 Fe(III)-[cytochrome b5] + NADH = 2 Fe(II)-[cytochrome b5] + NAD(+) + H(+). In terms of biological role, reductase transferring electrons from NADH to cytochrome b5. Required for the NADH-dependent electron transfer involved in the desaturation and hydroxylation of fatty acids and in the desaturation of sterol precursors. No activity with NADPH as electron donor. The protein is NADH--cytochrome b5 reductase 1 of Arabidopsis thaliana (Mouse-ear cress).